Consider the following 233-residue polypeptide: Large ribosomal subunit protein uL1 (233 aa).

It belongs to the universal ribosomal protein uL1 family. Part of the 50S ribosomal subunit.

Its function is as follows. Binds directly to 23S rRNA. The L1 stalk is quite mobile in the ribosome, and is involved in E site tRNA release. In terms of biological role, protein L1 is also a translational repressor protein, it controls the translation of the L11 operon by binding to its mRNA. The sequence is that of Large ribosomal subunit protein uL1 from Hamiltonella defensa subsp. Acyrthosiphon pisum (strain 5AT).